A 780-amino-acid chain; its full sequence is Cullin-5 (780 aa).

S34 bears the Phosphoserine mark. T210 carries the phosphothreonine modification. Residues 711-772 form the Cullin neddylation domain; that stretch reads RILRTQEAII…HRYIRRDEAD (62 aa). Residue K724 forms a Glycyl lysine isopeptide (Lys-Gly) (interchain with G-Cter in NEDD8) linkage.

The protein belongs to the cullin family. Component of multiple cullin-5-RING E3 ubiquitin-protein ligase complexes (ECS complexes, also named CRL5 complexes) formed of CUL5, Elongin BC (ELOB and ELOC), RNF7/RBX2 and a variable SOCS box domain-containing protein as substrate-specific recognition component. CUL5-containing ECS complexes specifically contain RNF7/RBX2, and not RBX1, as catalytic subunit. Component of the ECS(ASB2) complex with the substrate recognition component ASB2. Component of the ECS(ASB6) complex with the substrate recognition component ASB6. Component of the ECS(ASB7) complex with the substrate recognition component ASB7. Component of the ECS(ASB9) complex with the substrate recognition component ASB9. Component of the ECS(ASB11) complex with the substrate recognition component ASB11. Component of the ECS(ASB12) complex with the substrate recognition component ASB12. Component of the ECS(LRRC41) complex with the substrate recognition component LRRC41. Component of the ECS(SOCS1) complex with the substrate recognition component SOCS1. Component of the ECS(SOCS2) complex with the substrate recognition component SOCS2. Component of the ECS(WSB1) complex with the substrate recognition subunit WSB1. Component of the ECS(SOCS3) complex with the substrate recognition component SOCS3. Component of the ECS(SOCS7) complex with the substrate recognition component SOCS7. Component of the ECS(SPSB1) complex with the substrate recognition component SPSB1. Component of the ECS(SPSB3) complex with the substrate recognition component SPSB3. Component of the ECS(SPSB2) complex with the substrate recognition component SPSB2. Component of the ECS(SPSB4) complex with the substrate recognition component SPSB4. Component of the ECS(RAB40) complex with the substrate recognition subunit RAB40A, RAB40B or RAB40C. Component of the ECS(KLHDC1) complex with the substrate recognition component KLHDC1. Component of the ECS(PCMTD1) complex with the substrate recognition subunit PCMTD1. May also form complexes containing RBX1 and ELOA or VHL; additional evidence is however required to confirm this result in vivo. Interacts (when neddylated) with ARIH2; leading to activate the E3 ligase activity of ARIH2. Interacts with ERCC6; the interaction is induced by DNA damaging agents or inhibitors of RNA polymerase II elongation. Interacts with ELOA (via the BC-box). Interacts (unneddylated form) with DCUN1D1, DCUN1D2, DCUN1D3, DCUN1D4 and DCUN1D5; these interactions promote the cullin neddylation. In terms of processing, neddylated; which enhances the ubiquitination activity of ECS complexes and prevents binding of the inhibitor CAND1. Deneddylated via its interaction with the COP9 signalosome (CSN).

The protein localises to the nucleus. The protein operates within protein modification; protein ubiquitination. Functionally, core component of multiple cullin-5-RING E3 ubiquitin-protein ligase complexes (ECS complexes, also named CRL5 complexes), which mediate the ubiquitination and subsequent proteasomal degradation of target proteins. Acts a scaffold protein that contributes to catalysis through positioning of the substrate and the ubiquitin-conjugating enzyme. The functional specificity of the E3 ubiquitin-protein ligase complex depends on the variable SOCS box-containing substrate recognition component. Acts as a key regulator of neuron positioning during cortex development: component of various SOCS-containing ECS complexes, such as the ECS(SOCS7) complex, that regulate reelin signaling by mediating ubiquitination and degradation of DAB1. ECS(SOCS1) seems to direct ubiquitination of JAK2. The ECS(SOCS2) complex mediates the ubiquitination and subsequent proteasomal degradation of phosphorylated EPOR and GHR. The ECS(SPSB3) complex catalyzes ubiquitination of nuclear CGAS. ECS(KLHDC1) complex is part of the DesCEND (destruction via C-end degrons) pathway and mediates ubiquitination and degradation of truncated SELENOS selenoprotein produced by failed UGA/Sec decoding, which ends with a glycine. The ECS(ASB9) complex mediates ubiquitination and degradation of CKB. As part of some ECS complex, promotes 'Lys-11'-linked ubiquitination and degradation of BTRC. As part of a multisubunit ECS complex, polyubiquitinates monoubiquitinated POLR2A. As part of the ECS(RAB40C) complex, mediates ANKRD28 ubiquitination and degradation, thereby regulating protein phosphatase 6 (PP6) complex activity and focal adhesion assembly during cell migration. As part of the ECS(RAB40A) complex, mediates RHOU 'Lys-48'-linked ubiquitination and degradation, thus inhibiting focal adhesion disassembly during cell migration. As part of the ECS(RAB40B) complex, mediates LIMA1/EPLIN and RAP2 ubiquitination, thereby regulating actin cytoskeleton dynamics and stress fiber formation during cell migration. May form a cell surface vasopressin receptor. In Mus musculus (Mouse), this protein is Cullin-5.